We begin with the raw amino-acid sequence, 461 residues long: Cysteine--tRNA ligase (461 aa).

A Zn(2+)-binding site is contributed by Cys28. Residues 30 to 40 carry the 'HIGH' region motif; the sequence is ITVYDLCHIGH. Cys209, His234, and Glu238 together coordinate Zn(2+). The 'KMSKS' region signature appears at 266–270; the sequence is KMSKS. Lys269 lines the ATP pocket.

It belongs to the class-I aminoacyl-tRNA synthetase family. In terms of assembly, monomer. It depends on Zn(2+) as a cofactor.

It localises to the cytoplasm. It catalyses the reaction tRNA(Cys) + L-cysteine + ATP = L-cysteinyl-tRNA(Cys) + AMP + diphosphate. In Shigella boydii serotype 18 (strain CDC 3083-94 / BS512), this protein is Cysteine--tRNA ligase.